The primary structure comprises 627 residues: Pentatricopeptide repeat-containing protein At2g15630, mitochondrial (627 aa).

A mitochondrion-targeting transit peptide spans 1–29 (MRRFTVPCILRHRISILSGAGYSPAAARL). PPR repeat units follow at residues 154-188 (STIL…GFYP), 189-223 (KTET…EIKS), 224-258 (NVYT…GIKP), 259-293 (TIVT…GFQP), 294-324 (DMQT…IGLV), 326-360 (DSVS…GMVP), 361-395 (TFYT…GIVL), 396-430 (DSVT…GIQP), 431-465 (TQFT…GMKP), 466-500 (DLVM…SINP), 501-535 (DDVT…GIKP), 536-570 (DHIS…GFNP), and 571-605 (TLLT…GIVP).

It belongs to the PPR family. P subfamily.

Its subcellular location is the mitochondrion. The protein is Pentatricopeptide repeat-containing protein At2g15630, mitochondrial of Arabidopsis thaliana (Mouse-ear cress).